We begin with the raw amino-acid sequence, 105 residues long: Urease subunit beta (105 aa).

It belongs to the urease beta subunit family. In terms of assembly, heterotrimer of UreA (gamma), UreB (beta) and UreC (alpha) subunits. Three heterotrimers associate to form the active enzyme.

It localises to the cytoplasm. The catalysed reaction is urea + 2 H2O + H(+) = hydrogencarbonate + 2 NH4(+). It functions in the pathway nitrogen metabolism; urea degradation; CO(2) and NH(3) from urea (urease route): step 1/1. The sequence is that of Urease subunit beta from Pseudomonas entomophila (strain L48).